A 593-amino-acid polypeptide reads, in one-letter code: A-type ATP synthase subunit A (593 aa).

Gly-236–Thr-243 lines the ATP pocket.

Belongs to the ATPase alpha/beta chains family. As to quaternary structure, has multiple subunits with at least A(3), B(3), C, D, E, F, H, I and proteolipid K(x).

Its subcellular location is the cell membrane. The enzyme catalyses ATP + H2O + 4 H(+)(in) = ADP + phosphate + 5 H(+)(out). Functionally, component of the A-type ATP synthase that produces ATP from ADP in the presence of a proton gradient across the membrane. The A chain is the catalytic subunit. This Pyrobaculum islandicum (strain DSM 4184 / JCM 9189 / GEO3) protein is A-type ATP synthase subunit A.